The sequence spans 95 residues: Co-chaperonin GroES (95 aa).

It belongs to the GroES chaperonin family. As to quaternary structure, heptamer of 7 subunits arranged in a ring. Interacts with the chaperonin GroEL.

It localises to the cytoplasm. Its function is as follows. Together with the chaperonin GroEL, plays an essential role in assisting protein folding. The GroEL-GroES system forms a nano-cage that allows encapsulation of the non-native substrate proteins and provides a physical environment optimized to promote and accelerate protein folding. GroES binds to the apical surface of the GroEL ring, thereby capping the opening of the GroEL channel. The protein is Co-chaperonin GroES of Francisella tularensis subsp. tularensis (strain FSC 198).